A 472-amino-acid chain; its full sequence is Ribosomal RNA small subunit methyltransferase F (472 aa).

S-adenosyl-L-methionine-binding positions include 123–129 (AAAPGSK), E147, D174, and D192. C245 acts as the Nucleophile in catalysis.

It belongs to the class I-like SAM-binding methyltransferase superfamily. RsmB/NOP family.

The protein localises to the cytoplasm. The catalysed reaction is cytidine(1407) in 16S rRNA + S-adenosyl-L-methionine = 5-methylcytidine(1407) in 16S rRNA + S-adenosyl-L-homocysteine + H(+). Its function is as follows. Specifically methylates the cytosine at position 1407 (m5C1407) of 16S rRNA. The sequence is that of Ribosomal RNA small subunit methyltransferase F from Vibrio vulnificus (strain CMCP6).